A 68-amino-acid polypeptide reads, in one-letter code: MSDTKPCVCLDGSCSCENTCRCSDCRCPTSKAGRCQKSCCSCCPAGCTNCANGCVCKGKASDKCSCCS.

Residues C7, C9, C14, C16, C20, C22, C25, C27, C35, C39, C40, C42, C43, C47, C50, C54, C56, C64, C66, and C67 each coordinate a divalent metal cation.

This sequence belongs to the metallothionein superfamily. Type 1 family.

Metallothioneins have a high content of cysteine residues that bind various heavy metals. The protein is Metallothionein (mt) of Scyliorhinus torazame (Cloudy catshark).